The primary structure comprises 292 residues: Phosphoribosylglycinamide formyltransferase, chloroplastic (292 aa).

The N-terminal 65 residues, 1-65 (MESRVLFSSQ…KAASSTPQIV (65 aa)), are a transit peptide targeting the chloroplast. 88–90 (GSN) provides a ligand contact to N(1)-(5-phospho-beta-D-ribosyl)glycinamide. (6R)-10-formyltetrahydrofolate contacts are provided by residues 167–170 (LKLI) and Asn184. His186 (proton donor) is an active-site residue. A (6R)-10-formyltetrahydrofolate-binding site is contributed by Asp227. Glu256 contributes to the N(1)-(5-phospho-beta-D-ribosyl)glycinamide binding site.

The protein belongs to the GART family.

The protein resides in the plastid. The protein localises to the chloroplast. It catalyses the reaction N(1)-(5-phospho-beta-D-ribosyl)glycinamide + (6R)-10-formyltetrahydrofolate = N(2)-formyl-N(1)-(5-phospho-beta-D-ribosyl)glycinamide + (6S)-5,6,7,8-tetrahydrofolate + H(+). It functions in the pathway purine metabolism; IMP biosynthesis via de novo pathway; N(2)-formyl-N(1)-(5-phospho-D-ribosyl)glycinamide from N(1)-(5-phospho-D-ribosyl)glycinamide (10-formyl THF route): step 1/1. In Arabidopsis thaliana (Mouse-ear cress), this protein is Phosphoribosylglycinamide formyltransferase, chloroplastic (PUR3).